A 256-amino-acid chain; its full sequence is Triosephosphate isomerase (256 aa).

12-14 contacts substrate; it reads NWK. Catalysis depends on H99, which acts as the Electrophile. Catalysis depends on E171, which acts as the Proton acceptor. Residues G177, S217, and 238 to 239 each bind substrate; that span reads GG.

Belongs to the triosephosphate isomerase family. Homodimer.

Its subcellular location is the cytoplasm. It catalyses the reaction D-glyceraldehyde 3-phosphate = dihydroxyacetone phosphate. The protein operates within carbohydrate biosynthesis; gluconeogenesis. Its pathway is carbohydrate degradation; glycolysis; D-glyceraldehyde 3-phosphate from glycerone phosphate: step 1/1. Involved in the gluconeogenesis. Catalyzes stereospecifically the conversion of dihydroxyacetone phosphate (DHAP) to D-glyceraldehyde-3-phosphate (G3P). This Rubrobacter xylanophilus (strain DSM 9941 / JCM 11954 / NBRC 16129 / PRD-1) protein is Triosephosphate isomerase.